Here is a 228-residue protein sequence, read N- to C-terminus: Cytidylate kinase (228 aa).

17–25 (GPSASGKGT) contacts ATP.

This sequence belongs to the cytidylate kinase family. Type 1 subfamily.

It is found in the cytoplasm. It carries out the reaction CMP + ATP = CDP + ADP. It catalyses the reaction dCMP + ATP = dCDP + ADP. The protein is Cytidylate kinase of Paraburkholderia xenovorans (strain LB400).